A 130-amino-acid polypeptide reads, in one-letter code: Sigma-w pathway protein YsdB (130 aa).

The chain crosses the membrane as a helical span at residues phenylalanine 2–valine 22.

It is found in the membrane. May mediate a negative feedback loop that down-regulates the expression of the sigma-W regulon following the activation of sigma-W in response to conditions of cell envelope stress. Might interact with and inhibit the activity of the protease PrsW, or could bind to the anti-sigma-W factor RsiW and thereby protect it from PrsW-mediated cleavage. The chain is Sigma-w pathway protein YsdB (ysdB) from Bacillus subtilis (strain 168).